The chain runs to 341 residues: Methionine import ATP-binding protein MetN 1 (341 aa).

The ABC transporter domain maps to 2-241 (IEFRQVSKTF…PKTTIAQNFV (240 aa)). Position 38–45 (38–45 (GYSGAGKS)) interacts with ATP.

Belongs to the ABC transporter superfamily. Methionine importer (TC 3.A.1.24) family. In terms of assembly, the complex is composed of two ATP-binding proteins (MetN), two transmembrane proteins (MetI) and a solute-binding protein (MetQ).

It localises to the cell membrane. The enzyme catalyses L-methionine(out) + ATP + H2O = L-methionine(in) + ADP + phosphate + H(+). The catalysed reaction is D-methionine(out) + ATP + H2O = D-methionine(in) + ADP + phosphate + H(+). Functionally, part of the ABC transporter complex MetNIQ involved in methionine import. Responsible for energy coupling to the transport system. This chain is Methionine import ATP-binding protein MetN 1, found in Staphylococcus aureus (strain MW2).